The following is a 108-amino-acid chain: Peptidyl-prolyl cis-trans isomerase FKBP1A (108 aa).

The residue at position 10 (Ser10) is a Phosphoserine. The region spanning 20–108 (GQTCVVHYTG…VFDVELLKLE (89 aa)) is the PPIase FKBP-type domain. An N6-acetyllysine; alternate modification is found at Lys53. At Lys53 the chain carries N6-succinyllysine; alternate.

This sequence belongs to the FKBP-type PPIase family. FKBP1 subfamily. Interacts with TGFBR1; prevents TGFBR1 phosphorylation by TGFBR2 and stabilizes it in the inactive conformation. Interacts with ACVR1B and SMAD7. Identified in a complex composed of RYR1, PDE4D, PKA, FKBP1A and protein phosphatase 1 (PP1). Interacts directly with RYR2. Interacts directly with RYR3. Interacts directly with RYR1. Interacts with GLMN; rapamycin and FK506 abolish the interaction with GLMN in a dose dependent manner. In terms of tissue distribution, ubiquitous.

It is found in the cytoplasm. The protein resides in the cytosol. It localises to the sarcoplasmic reticulum membrane. It catalyses the reaction [protein]-peptidylproline (omega=180) = [protein]-peptidylproline (omega=0). With respect to regulation, inhibited by both FK506 and rapamycin. Its function is as follows. Keeps in an inactive conformation TGFBR1, the TGF-beta type I serine/threonine kinase receptor, preventing TGF-beta receptor activation in absence of ligand. Recruits SMAD7 to ACVR1B which prevents the association of SMAD2 and SMAD3 with the activin receptor complex, thereby blocking the activin signal. May modulate the RYR1 calcium channel activity. PPIases accelerate the folding of proteins. It catalyzes the cis-trans isomerization of proline imidic peptide bonds in oligopeptides. The chain is Peptidyl-prolyl cis-trans isomerase FKBP1A (Fkbp1a) from Rattus norvegicus (Rat).